Consider the following 405-residue polypeptide: Glucose-1-phosphate adenylyltransferase (405 aa).

Alpha-D-glucose 1-phosphate contacts are provided by residues Tyr96, Gly161, 176–177, and Ser194; that span reads EK.

This sequence belongs to the bacterial/plant glucose-1-phosphate adenylyltransferase family. Homotetramer.

It catalyses the reaction alpha-D-glucose 1-phosphate + ATP + H(+) = ADP-alpha-D-glucose + diphosphate. The protein operates within glycan biosynthesis; glycogen biosynthesis. Functionally, involved in the biosynthesis of ADP-glucose, a building block required for the elongation reactions to produce glycogen. Catalyzes the reaction between ATP and alpha-D-glucose 1-phosphate (G1P) to produce pyrophosphate and ADP-Glc. The chain is Glucose-1-phosphate adenylyltransferase from Aliivibrio fischeri (strain ATCC 700601 / ES114) (Vibrio fischeri).